Consider the following 523-residue polypeptide: Mediator of RNA polymerase II transcription subunit 1.2 (523 aa).

Belongs to the Mediator complex subunit 1 family. Component of the Mediator complex.

The protein resides in the nucleus. Its function is as follows. Component of the Mediator complex, a coactivator involved in the regulated transcription of nearly all RNA polymerase II-dependent genes. Mediator functions as a bridge to convey information from gene-specific regulatory proteins to the basal RNA polymerase II transcription machinery. Mediator is recruited to promoters by direct interactions with regulatory proteins and serves as a scaffold for the assembly of a functional preinitiation complex with RNA polymerase II and the general transcription factors. The sequence is that of Mediator of RNA polymerase II transcription subunit 1.2 (mdt-1.2) from Caenorhabditis briggsae.